We begin with the raw amino-acid sequence, 171 residues long: Transcription antitermination protein NusB (171 aa).

This sequence belongs to the NusB family.

Involved in transcription antitermination. Required for transcription of ribosomal RNA (rRNA) genes. Binds specifically to the boxA antiterminator sequence of the ribosomal RNA (rrn) operons. The polypeptide is Transcription antitermination protein NusB (Brucella abortus (strain S19)).